The following is a 485-amino-acid chain: Glutamate--tRNA ligase 1 (485 aa).

The short motif at 9–19 is the 'HIGH' region element; the sequence is PSPTGHLHIGG. The short motif at 250–254 is the 'KMSKS' region element; it reads KMSKR. Position 253 (lysine 253) interacts with ATP.

The protein belongs to the class-I aminoacyl-tRNA synthetase family. Glutamate--tRNA ligase type 1 subfamily. Monomer.

The protein resides in the cytoplasm. It catalyses the reaction tRNA(Glu) + L-glutamate + ATP = L-glutamyl-tRNA(Glu) + AMP + diphosphate. Functionally, catalyzes the attachment of glutamate to tRNA(Glu) in a two-step reaction: glutamate is first activated by ATP to form Glu-AMP and then transferred to the acceptor end of tRNA(Glu). This chain is Glutamate--tRNA ligase 1, found in Caldicellulosiruptor saccharolyticus (strain ATCC 43494 / DSM 8903 / Tp8T 6331).